A 101-amino-acid polypeptide reads, in one-letter code: Small ribosomal subunit protein uS10 (101 aa).

This sequence belongs to the universal ribosomal protein uS10 family. In terms of assembly, part of the 30S ribosomal subunit.

Its function is as follows. Involved in the binding of tRNA to the ribosomes. This is Small ribosomal subunit protein uS10 from Mycobacterium bovis (strain ATCC BAA-935 / AF2122/97).